We begin with the raw amino-acid sequence, 173 residues long: Glycine cleavage system H protein, mitochondrial (173 aa).

The transit peptide at 1–48 (MALRVVRSVRALLCTLRAVPSPAAPCPPRPWQLGVGAVRTLRTGPALL) directs the protein to the mitochondrion. Positions 66 to 148 (IGTVGISNFA…YEDGWLIKMT (83 aa)) constitute a Lipoyl-binding domain. An N6-lipoyllysine modification is found at Lys107.

It belongs to the GcvH family. Interacts with GLDC. The glycine cleavage system is composed of four proteins: P (GLDC), T (GCST), L (DLD) and H (GCSH). The cofactor is (R)-lipoate.

It localises to the mitochondrion. The glycine cleavage system catalyzes the degradation of glycine. The H protein (GCSH) shuttles the methylamine group of glycine from the P protein (GLDC) to the T protein (GCST). Has a pivotal role in the lipoylation of enzymes involved in cellular energetics such as the mitochondrial dihydrolipoyllysine-residue acetyltransferase component of pyruvate dehydrogenase complex (DLAT), and the mitochondrial dihydrolipoyllysine-residue succinyltransferase component of 2-oxoglutarate dehydrogenase complex (DLST). This chain is Glycine cleavage system H protein, mitochondrial, found in Homo sapiens (Human).